The primary structure comprises 240 residues: 1-(5-phosphoribosyl)-5-[(5-phosphoribosylamino)methylideneamino] imidazole-4-carboxamide isomerase (240 aa).

Asp8 serves as the catalytic Proton acceptor. Residue Asp129 is the Proton donor of the active site.

This sequence belongs to the HisA/HisF family.

The protein localises to the cytoplasm. The catalysed reaction is 1-(5-phospho-beta-D-ribosyl)-5-[(5-phospho-beta-D-ribosylamino)methylideneamino]imidazole-4-carboxamide = 5-[(5-phospho-1-deoxy-D-ribulos-1-ylimino)methylamino]-1-(5-phospho-beta-D-ribosyl)imidazole-4-carboxamide. The protein operates within amino-acid biosynthesis; L-histidine biosynthesis; L-histidine from 5-phospho-alpha-D-ribose 1-diphosphate: step 4/9. The protein is 1-(5-phosphoribosyl)-5-[(5-phosphoribosylamino)methylideneamino] imidazole-4-carboxamide isomerase of Listeria monocytogenes serotype 4b (strain CLIP80459).